The chain runs to 143 residues: MAPKPASTAGKAPASTASKAPVKSDAAKTASKSKVSSGADGEKKKRKKTRKETYSSYIYKVLKQVHPDTGISNKAMAILNSFVNDIFERIATEASKLASYSKKSTISSREIQTSVRLILPGELAKHAISEGTKSVTKFSSGGK.

Residues 1-52 (MAPKPASTAGKAPASTASKAPVKSDAAKTASKSKVSSGADGEKKKRKKTRKE) are disordered. Residue Lys-11 is modified to N6-acetyllysine; alternate. A Glycyl lysine isopeptide (Lys-Gly) (interchain with G-Cter in SUMO); alternate cross-link involves residue Lys-11. Ser-15 is modified (phosphoserine). An N6-acetyllysine modification is found at Lys-19. Low complexity predominate over residues 23–39 (KSDAAKTASKSKVSSGA). Lys-137 participates in a covalent cross-link: Glycyl lysine isopeptide (Lys-Gly) (interchain with G-Cter in ubiquitin).

Belongs to the histone H2B family. In terms of assembly, the nucleosome is a histone octamer containing two molecules each of H2A, H2B, H3 and H4 assembled in one H3-H4 heterotetramer and two H2A-H2B heterodimers. The octamer wraps approximately 147 bp of DNA. Post-translationally, monoubiquitinated to form H2BK123ub1. H2BK123ub1 gives a specific tag for epigenetic transcriptional activation and is also prerequisite for H3K4me and H3K79me formation. H2BK123ub1 also modulates the formation of double-strand breaks during meiosis and is a prerequisite for DNA-damage checkpoint activation. Phosphorylated to form H2BS10ph during progression through meiotic prophase. May be correlated with chromosome condensation. In terms of processing, acetylation of N-terminal lysines and particularly formation of H2BK11ac has a positive effect on transcription. Post-translationally, sumoylation to form H2BK6su occurs preferentially near the telomeres and represses gene transcription.

The protein localises to the nucleus. Its subcellular location is the chromosome. Functionally, core component of nucleosome. Nucleosomes wrap and compact DNA into chromatin, limiting DNA accessibility to the cellular machineries which require DNA as a template. Histones thereby play a central role in transcription regulation, DNA repair, DNA replication and chromosomal stability. DNA accessibility is regulated via a complex set of post-translational modifications of histones, also called histone code, and nucleosome remodeling. The polypeptide is Histone H2B (htbA) (Agaricus bisporus (White button mushroom)).